Reading from the N-terminus, the 481-residue chain is Regulator of G-protein signaling 1 (481 aa).

The disordered stretch occupies residues 1–31; sequence MPALHNPSSPPPSYEAVTSYRNGNSIDSGDK. The tract at residues 33–227 is fungal-DR; sequence QQCSRLMKIT…SVHEIGKSKN (195 aa). The region spanning 232 to 312 is the DEP domain; sequence PVYSVSSPSP…KGVSYFLTGK (81 aa). One can recognise an RGS domain in the interval 344 to 474; it reads ILETILRKPN…AGDSLLKFLE (131 aa).

It is found in the nucleus. Its subcellular location is the cytoplasm. In terms of biological role, negatively regulates pheromone signaling during mating. Acts in a negative feedback loop that is essential for the mating process. This loop acts to down-regulate cellular sensitivity to pheromone. Activated by ste11. The protein is Regulator of G-protein signaling 1 (rgs1) of Schizosaccharomyces pombe (strain 972 / ATCC 24843) (Fission yeast).